The chain runs to 435 residues: UPF0761 membrane protein mma_2179 (435 aa).

6 consecutive transmembrane segments (helical) span residues 45-65 (VLALVPILTIALAIFTTFPLF), 103-123 (LSAFGAVALIVTAVAMMLMID), 142-162 (ILVYWAIVTLGPLLIGASMTF), 177-197 (VPFVGAVFYTSISILLSMVAF), 208-228 (LVEWRDAVVGGLLAAIAFEIV), and 252-272 (FPIFLVWVYLGWLITLAGAVV).

It belongs to the UPF0761 family.

Its subcellular location is the cell inner membrane. This chain is UPF0761 membrane protein mma_2179, found in Janthinobacterium sp. (strain Marseille) (Minibacterium massiliensis).